A 282-amino-acid chain; its full sequence is MASKRWCFTLNYKTALERETFISLFSRDELNYFVCGDEIAPTTGQKHLQGYVSMKKLIRLGGLKKKFGSIAHWEIAKGDDFQNRDYCTKETLIAEIGAPVKKGSNRRKIMEIYEEDPEEMKLRDPDTALRCKAKKLREEYCSEVSVFSLRPWQIELHRALMEVPDDRTIIWAYGPDGGEGKSTFAKELIKYGWFYTAGGKTQDILYMYAQDPERNIAFDVPRCSSEMMNYQAMEMMKNRVFASTKYRPVDLCIRKKVHLIVFANVAPDPTKLSEDRIVIINC.

Positions 1–99 constitute a CRESS-DNA virus Rep endonuclease domain; sequence MASKRWCFTL…ETLIAEIGAP (99 aa). An RCR-1 motif is present at residues 7-10; that stretch reads CFTL. Residues Glu-38 and His-47 each coordinate a divalent metal cation. The short motif at 47–49 is the RCR-2 element; that stretch reads HLQ. Positions 56 to 77 match the Nuclear localization signal motif; it reads KLIRLGGLKKKFGSIAHWEIAK. Tyr-86 acts as the For DNA cleavage activity in catalysis. The RCR-3 motif lies at 86–89; the sequence is YCTK. The short motif at 99 to 105 is the Nuclear localization signal element; sequence PVKKGSN. An ATP-binding site is contributed by 174–182; the sequence is GPDGGEGKS.

This sequence belongs to the nanoviridea/circoviridae replication-associated protein family. As to quaternary structure, homooligomer (Potential). Rep binds to repeated DNA motifs (iterons). Mg(2+) is required as a cofactor. Requires Mn(2+) as cofactor.

It is found in the host nucleus. It carries out the reaction ATP + H2O = ADP + phosphate + H(+). Its function is as follows. Initiates and terminates the replication only of its own subviral DNA molecule. The closed circular ssDNA genome is first converted to a superhelical dsDNA. Rep binds a specific hairpin at the genome origin of replication. Introduces an endonucleolytic nick within the intergenic region of the genome, thereby initiating the rolling circle replication (RCR). Following cleavage, binds covalently to the 5'-phosphate of DNA as a tyrosyl ester. The cleavage gives rise to a free 3'-OH that serves as a primer for the cellular DNA polymerase. The polymerase synthesizes the (+) strand DNA by rolling circle mechanism. After one round of replication, a Rep-catalyzed nucleotidyl transfer reaction releases a circular single-stranded virus genome, thereby terminating the replication. Displays origin-specific DNA cleavage, nucleotidyl transferase, ATPase and helicase activities. This is Para-Rep C2 (C2) from Milk vetch dwarf C2 alphasatellite (MVDC2A).